Consider the following 430-residue polypeptide: Serine--tRNA ligase (430 aa).

238 to 240 (TAE) contributes to the L-serine binding site. 269 to 271 (RRE) is an ATP binding site. An L-serine-binding site is contributed by Glu292. 356-359 (EISS) is a binding site for ATP. Ser392 serves as a coordination point for L-serine.

The protein belongs to the class-II aminoacyl-tRNA synthetase family. Type-1 seryl-tRNA synthetase subfamily. As to quaternary structure, homodimer. The tRNA molecule binds across the dimer.

Its subcellular location is the cytoplasm. It carries out the reaction tRNA(Ser) + L-serine + ATP = L-seryl-tRNA(Ser) + AMP + diphosphate + H(+). It catalyses the reaction tRNA(Sec) + L-serine + ATP = L-seryl-tRNA(Sec) + AMP + diphosphate + H(+). It functions in the pathway aminoacyl-tRNA biosynthesis; selenocysteinyl-tRNA(Sec) biosynthesis; L-seryl-tRNA(Sec) from L-serine and tRNA(Sec): step 1/1. Functionally, catalyzes the attachment of serine to tRNA(Ser). Is also able to aminoacylate tRNA(Sec) with serine, to form the misacylated tRNA L-seryl-tRNA(Sec), which will be further converted into selenocysteinyl-tRNA(Sec). This chain is Serine--tRNA ligase, found in Synechocystis sp. (strain ATCC 27184 / PCC 6803 / Kazusa).